Reading from the N-terminus, the 341-residue chain is Putative UPF0607 protein ENSP00000383783 (341 aa).

Over residues 75 to 101 (EVRAEEPKEATEVKDQVETQGQEDNKR) the composition is skewed to basic and acidic residues. 2 disordered regions span residues 75–115 (EVRA…TSSL) and 216–278 (GLLM…PPPA). The span at 234-245 (SSRSSPSRAASH) shows a compositional bias: low complexity.

The protein belongs to the UPF0607 family.

In Homo sapiens (Human), this protein is Putative UPF0607 protein ENSP00000383783.